The primary structure comprises 75 residues: Small ribosomal subunit protein bS18 (75 aa).

It belongs to the bacterial ribosomal protein bS18 family. In terms of assembly, part of the 30S ribosomal subunit. Forms a tight heterodimer with protein bS6.

Functionally, binds as a heterodimer with protein bS6 to the central domain of the 16S rRNA, where it helps stabilize the platform of the 30S subunit. This is Small ribosomal subunit protein bS18 from Roseobacter denitrificans (strain ATCC 33942 / OCh 114) (Erythrobacter sp. (strain OCh 114)).